Consider the following 394-residue polypeptide: Flagellin A (394 aa).

Belongs to the bacterial flagellin family.

It localises to the secreted. It is found in the bacterial flagellum. Functionally, flagellin is the subunit protein which polymerizes to form the filaments of bacterial flagella. Homomer of FlaA is able to form a functional filament. The polypeptide is Flagellin A (flaA) (Rhizobium meliloti (strain 1021) (Ensifer meliloti)).